An 87-amino-acid chain; its full sequence is Small ribosomal subunit protein bS20 (87 aa).

Residues 1-22 (MANIKSQIKRIGTNKKAQERNK) form a disordered region.

It belongs to the bacterial ribosomal protein bS20 family.

Its function is as follows. Binds directly to 16S ribosomal RNA. The chain is Small ribosomal subunit protein bS20 from Clavibacter sepedonicus (Clavibacter michiganensis subsp. sepedonicus).